The primary structure comprises 818 residues: Cation/H(+) antiporter 6A (818 aa).

The next 13 membrane-spanning stretches (helical) occupy residues 51–71 (NFWE…FFIW), 88–110 (FTYM…KSWI), 123–143 (VAET…GVTM), 156–176 (SVIG…TFRY), 192–212 (LIIF…LKDL), 222–242 (IALS…FFNA), 248–268 (LYGF…ICVV), 288–308 (FYLY…NKVI), 310–330 (LFGP…YPLG), 340–360 (FNLG…VDLL), 376–396 (IYEV…VTTI), 409–429 (FALA…YTYA), and 438–458 (EVFT…PMLL).

This sequence belongs to the monovalent cation:proton antiporter 2 (CPA2) transporter (TC 2.A.37) family. CHX (TC 2.A.37.4) subfamily. Preferentially expressed in pollen.

It localises to the membrane. May operate as a cation/H(+) antiporter. The sequence is that of Cation/H(+) antiporter 6A (CHX6a) from Arabidopsis thaliana (Mouse-ear cress).